Here is an 825-residue protein sequence, read N- to C-terminus: Actin filament-associated protein 1-like 2 (825 aa).

The residue at position 56 (Tyr-56) is a Phosphotyrosine. The segment at 62 to 163 is disordered; it reads VNGEQNSASP…SKGKAAPYQW (102 aa). Polar residues predominate over residues 80–94; sequence PLTNGEPSQHSSAPQ. Thr-113 is subject to Phosphothreonine. PH domains follow at residues 175-271 and 353-447; these read DARI…EVSG and SLET…SESG. Position 408 is a phosphoserine (Ser-408). At Tyr-413 the chain carries Phosphotyrosine. Ser-484 carries the post-translational modification Phosphoserine. Residues 571-614 form a disordered region; it reads TLTVDPKPGTTPEEPHTESPGDPEVQQRQPEVQESSEPIEPTPR. Residues 593 to 608 are compositionally biased toward low complexity; that stretch reads PEVQQRQPEVQESSEP. Residues 657 to 754 are a coiled coil; sequence AEIKLGKNRT…VKDNLKKAEA (98 aa). Residues 757–801 are disordered; sequence VTLGTTVDTTHLDNMSPRPQPKAATPNPPPDSTPVNSASVLKNRP. Polar residues predominate over residues 759 to 769; it reads LGTTVDTTHLD.

In terms of assembly, interacts with SRC. Interacts with LCK when tyrosine phosphorylated. Post-translationally, tyrosine phosphorylated (by SRC).

It localises to the cytoplasm. Its function is as follows. May play a role in a signaling cascade by enhancing the kinase activity of SRC. Contributes to SRC-regulated transcription activation. The chain is Actin filament-associated protein 1-like 2 (Afap1l2) from Mus musculus (Mouse).